We begin with the raw amino-acid sequence, 120 residues long: Large ribosomal subunit protein uL18 (120 aa).

Belongs to the universal ribosomal protein uL18 family. In terms of assembly, part of the 50S ribosomal subunit; part of the 5S rRNA/L5/L18/L25 subcomplex. Contacts the 5S and 23S rRNAs.

This is one of the proteins that bind and probably mediate the attachment of the 5S RNA into the large ribosomal subunit, where it forms part of the central protuberance. The protein is Large ribosomal subunit protein uL18 of Nitrobacter hamburgensis (strain DSM 10229 / NCIMB 13809 / X14).